The sequence spans 1175 residues: Double-stranded RNA-specific adenosine deaminase (1175 aa).

Residues arginine 30 and arginine 42 each carry the asymmetric dimethylarginine modification. The 67-residue stretch at 135–201 (LSISQNPEQK…GKPPLWSLVP (67 aa)) folds into the Z-binding 1 domain. The interval 135–204 (LSISQNPEQK…PLWSLVPLSQ (70 aa)) is interaction with Z-DNA. Residues 207–239 (TQPPRAVNSDKEVPRGEPDLDSEDGDPASDLEG) are disordered. Basic and acidic residues predominate over residues 214–224 (NSDKEVPRGEP). The segment covering 225–235 (DLDSEDGDPAS) has biased composition (acidic residues). Residues serine 228 and serine 235 each carry the phosphoserine modification. The region spanning 243–307 (LLDMAEIKEK…ATPPIWYLTD (65 aa)) is the Z-binding 2 domain. Residues 315–384 (MKRSTHSGPA…ARPGPVRLRP (70 aa)) are disordered. The span at 357–376 (KRVENGQEPVTKYESRHEAR) shows a compositional bias: basic and acidic residues. Residue lysine 368 forms a Glycyl lysine isopeptide (Lys-Gly) (interchain with G-Cter in SUMO); alternate linkage. Lysine 368 participates in a covalent cross-link: Glycyl lysine isopeptide (Lys-Gly) (interchain with G-Cter in SUMO1); alternate. Lysine 368 is covalently cross-linked (Glycyl lysine isopeptide (Lys-Gly) (interchain with G-Cter in SUMO2); alternate). Serine 431 carries the post-translational modification Phosphoserine. Residues 453 to 521 (NPVSGLLEYA…AVKAMAILLR (69 aa)) enclose the DRBM 1 domain. Positions 524 to 561 (KAKDSGQPEELSNCPMEEDPEKPAESQPPSSSATSLFS) are disordered. Positions 550–561 (QPPSSSATSLFS) are enriched in polar residues. 3 positions are modified to phosphoserine: serine 564, serine 579, and serine 586. The 69-residue stretch at 564–632 (SPVTTLLECM…AEEAMKALQE (69 aa)) folds into the DRBM 2 domain. Positions 632-652 (EEAANSADDQSGGANTDSLDE) are disordered. The segment covering 638 to 648 (ADDQSGGANTD) has biased composition (polar residues). The interval 662–671 (IGELVRYLNT) is N-terminal extension of DRBM 3 and constituent of a bi-partite nuclear localization signal. The DRBM 3 domain maps to 672–740 (NPVGGLLEYA…ADAALRVLIG (69 aa)). Residues 741-747 (ESEKAEQ) form a C-terminal extension of DRBM 3 and constituent of a bi-partite nuclear localization signal region. At threonine 754 the chain carries Phosphothreonine. Phosphoserine occurs at positions 760, 769, and 771. Lysine 821 participates in a covalent cross-link: Glycyl lysine isopeptide (Lys-Gly) (interchain with G-Cter in SUMO2). The region spanning 832 to 1167 (SLGTGNRCVK…ISKPQEEKNF (336 aa)) is the A to I editase domain. Histidine 856 is a Zn(2+) binding site. The Proton donor role is filled by glutamate 858. Zn(2+) is bound by residues cysteine 912 and cysteine 982.

In terms of assembly, homodimer. Homodimerization is essential for its catalytic activity. Isoform 5 can form heterodimers with ADARB1/ADAR2. Isoform 1 interacts with ILF2/NF45 and ILF3/NF90. Binding to ILF3/NF90 up-regulates ILF3-mediated gene expression. Isoform 1 and isoform 5 (via DRBM 3 domain) interact with TNPO1. Isoform 5 (via DRBM domains) interacts with XPO5. Isoform 1 and isoform 5 can interact with EIF2AK2/PKR and UPF1. In terms of processing, sumoylation reduces RNA-editing activity. Detected in brain.

It is found in the cytoplasm. Its subcellular location is the nucleus. The enzyme catalyses adenosine in double-stranded RNA + H2O + H(+) = inosine in double-stranded RNA + NH4(+). In terms of biological role, catalyzes the hydrolytic deamination of adenosine to inosine in double-stranded RNA (dsRNA) referred to as A-to-I RNA editing. This may affect gene expression and function in a number of ways that include mRNA translation by changing codons and hence the amino acid sequence of proteins; pre-mRNA splicing by altering splice site recognition sequences; RNA stability by changing sequences involved in nuclease recognition; genetic stability in the case of RNA virus genomes by changing sequences during viral RNA replication; and RNA structure-dependent activities such as microRNA production or targeting or protein-RNA interactions. Can edit both viral and cellular RNAs and can edit RNAs at multiple sites (hyper-editing) or at specific sites (site-specific editing). Its cellular RNA substrates include: bladder cancer-associated protein (BLCAP), neurotransmitter receptors for glutamate (GRIA2) and serotonin (HTR2C) and GABA receptor (GABRA3). Site-specific RNA editing of transcripts encoding these proteins results in amino acid substitutions which consequently alters their functional activities. Exhibits low-level editing at the GRIA2 Q/R site, but edits efficiently at the R/G site and HOTSPOT1. Does not affect polyomavirus replication but provides protection against virus-induced cytopathic effects. Essential for embryonic development and cell survival and plays a critical role in the maintenance of hematopoietic stem cells. The polypeptide is Double-stranded RNA-specific adenosine deaminase (Adar) (Rattus norvegicus (Rat)).